An 860-amino-acid chain; its full sequence is Leucine--tRNA ligase (860 aa).

The short motif at 42 to 52 is the 'HIGH' region element; it reads PYPSGRLHMGH. The 'KMSKS' region motif lies at 619–623; sequence KMSKS. K622 is an ATP binding site.

Belongs to the class-I aminoacyl-tRNA synthetase family.

It localises to the cytoplasm. It carries out the reaction tRNA(Leu) + L-leucine + ATP = L-leucyl-tRNA(Leu) + AMP + diphosphate. The sequence is that of Leucine--tRNA ligase from Proteus mirabilis (strain HI4320).